We begin with the raw amino-acid sequence, 361 residues long: Phosphoserine aminotransferase (361 aa).

Residue Arg-43 coordinates L-glutamate. Pyridoxal 5'-phosphate-binding positions include 77–78, Trp-103, Thr-152, Asp-172, and Gln-195; that span reads AS. Lys-196 is subject to N6-(pyridoxal phosphate)lysine. 237-238 contacts pyridoxal 5'-phosphate; the sequence is NT.

This sequence belongs to the class-V pyridoxal-phosphate-dependent aminotransferase family. SerC subfamily. In terms of assembly, homodimer. It depends on pyridoxal 5'-phosphate as a cofactor.

The protein resides in the cytoplasm. It catalyses the reaction O-phospho-L-serine + 2-oxoglutarate = 3-phosphooxypyruvate + L-glutamate. It carries out the reaction 4-(phosphooxy)-L-threonine + 2-oxoglutarate = (R)-3-hydroxy-2-oxo-4-phosphooxybutanoate + L-glutamate. It participates in amino-acid biosynthesis; L-serine biosynthesis; L-serine from 3-phospho-D-glycerate: step 2/3. It functions in the pathway cofactor biosynthesis; pyridoxine 5'-phosphate biosynthesis; pyridoxine 5'-phosphate from D-erythrose 4-phosphate: step 3/5. In terms of biological role, catalyzes the reversible conversion of 3-phosphohydroxypyruvate to phosphoserine and of 3-hydroxy-2-oxo-4-phosphonooxybutanoate to phosphohydroxythreonine. In Desulfosudis oleivorans (strain DSM 6200 / JCM 39069 / Hxd3) (Desulfococcus oleovorans), this protein is Phosphoserine aminotransferase.